Reading from the N-terminus, the 140-residue chain is Ribosome-binding factor A (140 aa).

It belongs to the RbfA family. In terms of assembly, monomer. Binds 30S ribosomal subunits, but not 50S ribosomal subunits or 70S ribosomes.

It is found in the cytoplasm. One of several proteins that assist in the late maturation steps of the functional core of the 30S ribosomal subunit. Associates with free 30S ribosomal subunits (but not with 30S subunits that are part of 70S ribosomes or polysomes). Required for efficient processing of 16S rRNA. May interact with the 5'-terminal helix region of 16S rRNA. This Cereibacter sphaeroides (strain ATCC 17023 / DSM 158 / JCM 6121 / CCUG 31486 / LMG 2827 / NBRC 12203 / NCIMB 8253 / ATH 2.4.1.) (Rhodobacter sphaeroides) protein is Ribosome-binding factor A.